The primary structure comprises 205 residues: UPF0548 protein At2g17695 (205 aa).

The protein belongs to the UPF0548 family.

The chain is UPF0548 protein At2g17695 from Arabidopsis thaliana (Mouse-ear cress).